A 1142-amino-acid polypeptide reads, in one-letter code: Auxin response factor 5 (1142 aa).

The TF-B3 DNA-binding region spans 148 to 250 (FCKTLTASDT…QLLLGIRRAN (103 aa)). One can recognise a PB1 domain in the interval 1009–1093 (RTFTKVYKRG…RCIRILSPQE (85 aa)). A disordered region spans residues 1114 to 1142 (SSSDGVNGWRPRCDQNPGNPSIGPYDQFE).

It belongs to the ARF family. In terms of assembly, homodimers and heterodimers. In terms of tissue distribution, expressed in roots, culms, leaves and young panicles.

The protein resides in the nucleus. In terms of biological role, auxin response factors (ARFs) are transcriptional factors that bind specifically to the DNA sequence 5'-TGTCTC-3' found in the auxin-responsive promoter elements (AuxREs). This Oryza sativa subsp. japonica (Rice) protein is Auxin response factor 5 (ARF5).